The chain runs to 325 residues: Heat-inducible transcription repressor HrcA (325 aa).

Belongs to the HrcA family.

Functionally, negative regulator of class I heat shock genes (grpE-dnaK-dnaJ and groELS operons). Prevents heat-shock induction of these operons. This Staphylococcus aureus (strain USA300) protein is Heat-inducible transcription repressor HrcA.